Here is a 454-residue protein sequence, read N- to C-terminus: Bifunctional protein GlmU (454 aa).

The pyrophosphorylase stretch occupies residues 1-228 (MTLPLHVVIL…PQDVEGANDP (228 aa)). UDP-N-acetyl-alpha-D-glucosamine-binding positions include 10-13 (LAAG), lysine 24, glutamine 76, 81-82 (GT), 103-105 (YGD), glycine 138, glutamate 153, asparagine 168, and asparagine 226. Mg(2+) is bound at residue aspartate 105. Asparagine 226 lines the Mg(2+) pocket. The segment at 229–249 (WQLAQLERAWQLRAARALCLQ) is linker. Residues 250 to 454 (GVRMADPARV…IEGWERPKKK (205 aa)) are N-acetyltransferase. Residues arginine 332 and lysine 350 each coordinate UDP-N-acetyl-alpha-D-glucosamine. The active-site Proton acceptor is the histidine 362. UDP-N-acetyl-alpha-D-glucosamine contacts are provided by tyrosine 365 and asparagine 376. Acetyl-CoA contacts are provided by residues alanine 379, 385-386 (NY), serine 404, alanine 422, and arginine 439.

It in the N-terminal section; belongs to the N-acetylglucosamine-1-phosphate uridyltransferase family. This sequence in the C-terminal section; belongs to the transferase hexapeptide repeat family. In terms of assembly, homotrimer. Requires Mg(2+) as cofactor.

Its subcellular location is the cytoplasm. It carries out the reaction alpha-D-glucosamine 1-phosphate + acetyl-CoA = N-acetyl-alpha-D-glucosamine 1-phosphate + CoA + H(+). The enzyme catalyses N-acetyl-alpha-D-glucosamine 1-phosphate + UTP + H(+) = UDP-N-acetyl-alpha-D-glucosamine + diphosphate. The protein operates within nucleotide-sugar biosynthesis; UDP-N-acetyl-alpha-D-glucosamine biosynthesis; N-acetyl-alpha-D-glucosamine 1-phosphate from alpha-D-glucosamine 6-phosphate (route II): step 2/2. It functions in the pathway nucleotide-sugar biosynthesis; UDP-N-acetyl-alpha-D-glucosamine biosynthesis; UDP-N-acetyl-alpha-D-glucosamine from N-acetyl-alpha-D-glucosamine 1-phosphate: step 1/1. It participates in bacterial outer membrane biogenesis; LPS lipid A biosynthesis. In terms of biological role, catalyzes the last two sequential reactions in the de novo biosynthetic pathway for UDP-N-acetylglucosamine (UDP-GlcNAc). The C-terminal domain catalyzes the transfer of acetyl group from acetyl coenzyme A to glucosamine-1-phosphate (GlcN-1-P) to produce N-acetylglucosamine-1-phosphate (GlcNAc-1-P), which is converted into UDP-GlcNAc by the transfer of uridine 5-monophosphate (from uridine 5-triphosphate), a reaction catalyzed by the N-terminal domain. In Xanthomonas campestris pv. campestris (strain B100), this protein is Bifunctional protein GlmU.